The following is a 531-amino-acid chain: Non-muscle caldesmon (531 aa).

A myosin and calmodulin-binding region spans residues 20-200 (AYQRNDDDEE…LKGGNLGENQ (181 aa)). The segment at 21–379 (YQRNDDDEEE…KKPFKCFTPK (359 aa)) is disordered. The segment covering 41–50 (QERLRQKQEE) has biased composition (basic and acidic residues). Residues 54–68 (GQVTDQVEAHVQNSA) show a composition bias toward polar residues. The segment covering 93 to 116 (RLARREERRQKRLQEALERQKEFD) has biased composition (basic and acidic residues). Positions 120–133 (TDGSLSVPSRRMQN) are enriched in polar residues. Phosphoserine is present on serine 123. Positions 143–156 (GEEKGESRSGRYEM) are enriched in basic and acidic residues. Positions 162 to 172 (VITSYQKNSYQ) are enriched in polar residues. A compositionally biased stretch (basic and acidic residues) spans 200–227 (QIKDEKIKKDKEPKEEVKNFLDRKKGFT). At serine 249 the chain carries Phosphoserine; by CDK1. 2 stretches are compositionally biased toward basic and acidic residues: residues 271–297 (AGKRLEELRRRRGETESEEFEKLKQKQ) and 305–372 (EELK…DKKP). The segment at 303 to 360 (ELEELKKKREERRKVLEEEEQRRKQEEADRKAREEEEKRRLKEEIERRRAEAAEKRQK) is tropomyosin-binding. Phosphoserine is present on serine 382. Lysine 384 is covalently cross-linked (Glycyl lysine isopeptide (Lys-Gly) (interchain with G-Cter in SUMO2)). A strong actin-binding region spans residues 392–424 (LNKSVQKSGVKSTHQAAVVSKIDSRLEQYTNAI). Serine 395 carries the post-translational modification Phosphoserine. Positions 402-412 (KSTHQAAVVSK) are tropomyosin-binding. The segment at 454–460 (WEKGSVF) is calmodulin-binding. The interval 458-531 (SVFSSPSASG…VDKVTSPTKV (74 aa)) is disordered. Over residues 459-471 (VFSSPSASGTPNK) the composition is skewed to polar residues. Serine 462 is modified (phosphoserine; by CDK1). At threonine 468 the chain carries Phosphothreonine; by CDK1. Residues serine 491 and serine 497 each carry the phosphoserine; by CDK1 modification. A compositionally biased stretch (basic and acidic residues) spans 503–522 (SDLRPGDVSGKRNLWEKQSV). The interval 506–531 (RPGDVSGKRNLWEKQSVDKVTSPTKV) is weak actin-binding. Serine 527 bears the Phosphoserine; by CDK1 mark.

This sequence belongs to the caldesmon family. Post-translationally, in non-muscle cells, phosphorylation by CDK1 during mitosis causes caldesmon to dissociate from microfilaments. Phosphorylation reduces caldesmon binding to actin, myosin, and calmodulin as well as its inhibition of actomyosin ATPase activity. Phosphorylation also occurs in both quiescent and dividing smooth muscle cells with similar effects on the interaction with actin and calmodulin and on microfilaments reorganization. CDK1-mediated phosphorylation promotes Schwann cell migration during peripheral nerve regeneration. As to expression, high-molecular-weight caldesmon (h-caldesmon) is predominantly expressed in smooth muscles, whereas low-molecular-weight caldesmon (l-caldesmon) is widely distributed in non-muscle tissues and cells. Not expressed in skeletal muscle or heart.

It is found in the cytoplasm. It localises to the cytoskeleton. Its subcellular location is the myofibril. The protein resides in the stress fiber. In terms of biological role, actin- and myosin-binding protein implicated in the regulation of actomyosin interactions in smooth muscle and nonmuscle cells (could act as a bridge between myosin and actin filaments). Stimulates actin binding of tropomyosin which increases the stabilization of actin filament structure. In muscle tissues, inhibits the actomyosin ATPase by binding to F-actin. This inhibition is attenuated by calcium-calmodulin and is potentiated by tropomyosin. Interacts with actin, myosin, two molecules of tropomyosin and with calmodulin. Also plays an essential role during cellular mitosis and receptor capping. Involved in Schwann cell migration during peripheral nerve regeneration. The protein is Non-muscle caldesmon (Cald1) of Rattus norvegicus (Rat).